Here is a 332-residue protein sequence, read N- to C-terminus: Ribosomal RNA small subunit methyltransferase H (332 aa).

Residues 36–38 (GGH), aspartate 61, phenylalanine 88, aspartate 114, and glutamine 121 contribute to the S-adenosyl-L-methionine site.

Belongs to the methyltransferase superfamily. RsmH family.

The protein localises to the cytoplasm. The catalysed reaction is cytidine(1402) in 16S rRNA + S-adenosyl-L-methionine = N(4)-methylcytidine(1402) in 16S rRNA + S-adenosyl-L-homocysteine + H(+). Its function is as follows. Specifically methylates the N4 position of cytidine in position 1402 (C1402) of 16S rRNA. This chain is Ribosomal RNA small subunit methyltransferase H, found in Pelodictyon phaeoclathratiforme (strain DSM 5477 / BU-1).